Reading from the N-terminus, the 425-residue chain is Probable threonylcarbamoyladenosine tRNA methylthiotransferase (425 aa).

The MTTase N-terminal domain occupies 2 to 110; the sequence is VKVYIENYGC…IVQAVEYAMR (109 aa). [4Fe-4S] cluster-binding residues include C11, C47, C76, C148, C152, and C155. The region spanning 134-363 is the Radical SAM core domain; it reads SPRNVYFILP…HRIRLQISYE (230 aa). Residues 366–425 form the TRAM domain; the sequence is RKYIGKKVKVLIHGEGKKGNVDAVTMNYKHIILPEGRKGEFREARVKNAASTYLLGEIIT.

It belongs to the methylthiotransferase family. CDKAL1 subfamily. The cofactor is [4Fe-4S] cluster.

The catalysed reaction is N(6)-L-threonylcarbamoyladenosine(37) in tRNA + (sulfur carrier)-SH + AH2 + 2 S-adenosyl-L-methionine = 2-methylsulfanyl-N(6)-L-threonylcarbamoyladenosine(37) in tRNA + (sulfur carrier)-H + 5'-deoxyadenosine + L-methionine + A + S-adenosyl-L-homocysteine + 2 H(+). In terms of biological role, catalyzes the methylthiolation of N6-threonylcarbamoyladenosine (t(6)A), leading to the formation of 2-methylthio-N6-threonylcarbamoyladenosine (ms(2)t(6)A) at position 37 in tRNAs that read codons beginning with adenine. This Pyrococcus horikoshii (strain ATCC 700860 / DSM 12428 / JCM 9974 / NBRC 100139 / OT-3) protein is Probable threonylcarbamoyladenosine tRNA methylthiotransferase.